The sequence spans 434 residues: Maltotriose-binding protein (434 aa).

The first 20 residues, 1-20 (MRRATYAFALLAILVLGVVA), serve as a signal peptide directing secretion. Residues 28–52 (TTTPTQTSPATQPTTTQTPTQTETQ) are disordered. A compositionally biased stretch (low complexity) spans 29–52 (TTPTQTSPATQPTTTQTPTQTETQ).

It belongs to the bacterial solute-binding protein 1 family.

In terms of biological role, involved in an abc transport system for maltotriose. Binds maltotriose much more tightly than maltose. The chain is Maltotriose-binding protein (malE) from Pyrococcus furiosus (strain ATCC 43587 / DSM 3638 / JCM 8422 / Vc1).